The following is a 450-amino-acid chain: 3-phosphoshikimate 1-carboxyvinyltransferase (450 aa).

The tract at residues 1 to 26 (MSGHGTPIPMTSRRASPLKGEAHVPG) is disordered. Lysine 28, serine 29, and arginine 33 together coordinate 3-phosphoshikimate. Lysine 28 contacts phosphoenolpyruvate. Glycine 101 and arginine 129 together coordinate phosphoenolpyruvate. 4 residues coordinate 3-phosphoshikimate: serine 174, glutamine 176, aspartate 327, and lysine 354. Glutamine 176 provides a ligand contact to phosphoenolpyruvate. Aspartate 327 serves as the catalytic Proton acceptor. Residues arginine 358 and arginine 403 each contribute to the phosphoenolpyruvate site.

The protein belongs to the EPSP synthase family. In terms of assembly, monomer.

The protein resides in the cytoplasm. The catalysed reaction is 3-phosphoshikimate + phosphoenolpyruvate = 5-O-(1-carboxyvinyl)-3-phosphoshikimate + phosphate. Its pathway is metabolic intermediate biosynthesis; chorismate biosynthesis; chorismate from D-erythrose 4-phosphate and phosphoenolpyruvate: step 6/7. In terms of biological role, catalyzes the transfer of the enolpyruvyl moiety of phosphoenolpyruvate (PEP) to the 5-hydroxyl of shikimate-3-phosphate (S3P) to produce enolpyruvyl shikimate-3-phosphate and inorganic phosphate. This is 3-phosphoshikimate 1-carboxyvinyltransferase from Ruegeria sp. (strain TM1040) (Silicibacter sp.).